A 566-amino-acid chain; its full sequence is 2-isopropylmalate synthase (566 aa).

Residues 32–306 (PLWCAVDLRD…DPQIDFSNID (275 aa)) form the Pyruvate carboxyltransferase domain. The Mg(2+) site is built by Asp41, His245, His247, and Asn281. Positions 451-566 (PVRPLERIKQ…VVSAINRASR (116 aa)) are regulatory domain.

This sequence belongs to the alpha-IPM synthase/homocitrate synthase family. LeuA type 2 subfamily. In terms of assembly, homodimer. Mg(2+) is required as a cofactor.

It is found in the cytoplasm. The catalysed reaction is 3-methyl-2-oxobutanoate + acetyl-CoA + H2O = (2S)-2-isopropylmalate + CoA + H(+). Its pathway is amino-acid biosynthesis; L-leucine biosynthesis; L-leucine from 3-methyl-2-oxobutanoate: step 1/4. Catalyzes the condensation of the acetyl group of acetyl-CoA with 3-methyl-2-oxobutanoate (2-ketoisovalerate) to form 3-carboxy-3-hydroxy-4-methylpentanoate (2-isopropylmalate). This is 2-isopropylmalate synthase from Mycobacterium ulcerans (strain Agy99).